Reading from the N-terminus, the 405-residue chain is Arginine biosynthesis bifunctional protein ArgJ, mitochondrial (405 aa).

Residues Thr174, Lys200, Thr211, and Glu300 each contribute to the substrate site. Thr211 functions as the Nucleophile in the catalytic mechanism.

It belongs to the ArgJ family. Heterodimer of an alpha and a beta chain. Post-translationally, the alpha and beta chains are autoproteolytically processed from a single precursor protein within the mitochondrion.

It is found in the mitochondrion matrix. The catalysed reaction is N(2)-acetyl-L-ornithine + L-glutamate = N-acetyl-L-glutamate + L-ornithine. The enzyme catalyses L-glutamate + acetyl-CoA = N-acetyl-L-glutamate + CoA + H(+). It participates in amino-acid biosynthesis; L-arginine biosynthesis; L-ornithine and N-acetyl-L-glutamate from L-glutamate and N(2)-acetyl-L-ornithine (cyclic): step 1/1. It functions in the pathway amino-acid biosynthesis; L-arginine biosynthesis; N(2)-acetyl-L-ornithine from L-glutamate: step 1/4. Its function is as follows. Catalyzes two activities which are involved in the cyclic version of arginine biosynthesis: the synthesis of acetylglutamate from glutamate and acetyl-CoA, and of ornithine by transacetylation between acetylornithine and glutamate. This is Arginine biosynthesis bifunctional protein ArgJ, mitochondrial from Candida tropicalis (strain ATCC MYA-3404 / T1) (Yeast).